We begin with the raw amino-acid sequence, 90 residues long: Iron oxidase (90 aa).

The segment at residues 1-37 (MSEKDKMITRRDALRNIAVVVGSVATTTMMGVGVADA) is a signal peptide (tat-type signal). Residues cysteine 57, cysteine 60, cysteine 69, and cysteine 82 each contribute to the [4Fe-4S] cluster site.

Belongs to the high-potential iron-sulfur protein (HiPIP) family. In terms of assembly, homomultimer. In terms of processing, predicted to be exported by the Tat system. The position of the signal peptide cleavage has been experimentally proven.

Its subcellular location is the periplasm. Catalyzes the oxidation of Fe(2+) to Fe(3+) coupled to cytochrome c552 reduction. The polypeptide is Iron oxidase (iro) (Acidithiobacillus ferrooxidans (Thiobacillus ferrooxidans)).